Consider the following 90-residue polypeptide: Probable Fe(2+)-trafficking protein (90 aa).

It belongs to the Fe(2+)-trafficking protein family.

Could be a mediator in iron transactions between iron acquisition and iron-requiring processes, such as synthesis and/or repair of Fe-S clusters in biosynthetic enzymes. The polypeptide is Probable Fe(2+)-trafficking protein (Chromobacterium violaceum (strain ATCC 12472 / DSM 30191 / JCM 1249 / CCUG 213 / NBRC 12614 / NCIMB 9131 / NCTC 9757 / MK)).